The chain runs to 252 residues: Probable transcriptional regulatory protein A1C_04175 (252 aa).

The protein belongs to the TACO1 family.

The protein localises to the cytoplasm. This is Probable transcriptional regulatory protein A1C_04175 from Rickettsia akari (strain Hartford).